Here is a 488-residue protein sequence, read N- to C-terminus: Ribulose bisphosphate carboxylase large chain (488 aa).

Residues Asn-127 and Thr-177 each coordinate substrate. Lys-179 functions as the Proton acceptor in the catalytic mechanism. Residue Lys-181 coordinates substrate. Mg(2+) contacts are provided by Lys-205, Asp-207, and Glu-208. An N6-carboxylysine modification is found at Lys-205. The Proton acceptor role is filled by His-297. The substrate site is built by Arg-298, His-330, and Ser-382.

The protein belongs to the RuBisCO large chain family. Type I subfamily. Heterohexadecamer of 8 large chains and 8 small chains. Requires Mg(2+) as cofactor.

It is found in the plastid. The protein resides in the chloroplast. It catalyses the reaction 2 (2R)-3-phosphoglycerate + 2 H(+) = D-ribulose 1,5-bisphosphate + CO2 + H2O. The enzyme catalyses D-ribulose 1,5-bisphosphate + O2 = 2-phosphoglycolate + (2R)-3-phosphoglycerate + 2 H(+). In terms of biological role, ruBisCO catalyzes two reactions: the carboxylation of D-ribulose 1,5-bisphosphate, the primary event in carbon dioxide fixation, as well as the oxidative fragmentation of the pentose substrate in the photorespiration process. Both reactions occur simultaneously and in competition at the same active site. The sequence is that of Ribulose bisphosphate carboxylase large chain (rbcL) from Porphyra umbilicalis (Purple laver).